Consider the following 876-residue polypeptide: Alanine--tRNA ligase (876 aa).

Lys74 is subject to N6-acetyllysine. Positions 564, 568, 666, and 670 each coordinate Zn(2+).

This sequence belongs to the class-II aminoacyl-tRNA synthetase family. In terms of assembly, homotetramer. Requires Zn(2+) as cofactor.

It is found in the cytoplasm. It catalyses the reaction tRNA(Ala) + L-alanine + ATP = L-alanyl-tRNA(Ala) + AMP + diphosphate. In terms of biological role, catalyzes the attachment of alanine to tRNA(Ala) in a two-step reaction: alanine is first activated by ATP to form Ala-AMP and then transferred to the acceptor end of tRNA(Ala). Also edits incorrectly charged Ser-tRNA(Ala) and Gly-tRNA(Ala) via its editing domain. This Escherichia coli O9:H4 (strain HS) protein is Alanine--tRNA ligase.